Consider the following 163-residue polypeptide: Lipoprotein signal peptidase (163 aa).

Helical transmembrane passes span 9-29 (YLAI…SALS), 39-59 (VLPF…SFLA), 67-87 (WFFT…LYKS), and 92-112 (LLCI…LDRV). Active-site residues include Asp-119 and Asp-137. Residues 130–150 (WPAFNIADSAICVGAALIIWG) traverse the membrane as a helical segment.

The protein belongs to the peptidase A8 family.

The protein resides in the cell inner membrane. It catalyses the reaction Release of signal peptides from bacterial membrane prolipoproteins. Hydrolyzes -Xaa-Yaa-Zaa-|-(S,diacylglyceryl)Cys-, in which Xaa is hydrophobic (preferably Leu), and Yaa (Ala or Ser) and Zaa (Gly or Ala) have small, neutral side chains.. It functions in the pathway protein modification; lipoprotein biosynthesis (signal peptide cleavage). Functionally, this protein specifically catalyzes the removal of signal peptides from prolipoproteins. This chain is Lipoprotein signal peptidase, found in Polynucleobacter necessarius subsp. necessarius (strain STIR1).